The sequence spans 390 residues: Flavohemoprotein (390 aa).

An N-acetylserine modification is found at S2. Residues 12–149 (PLTPTEINFL…LAQTLIDAEA (138 aa)) form the Globin domain. Residue H96 coordinates heme b. Residues Y106 and E148 each act as charge relay system in the active site. Residues 157–390 (WEEFKDFRVT…EFFGPTDPDC (234 aa)) are reductase. An FAD-binding FR-type domain is found at 158-263 (EEFKDFRVTK…HAPVGTMKYD (106 aa)). Residues Y196 and 214–217 (REYS) each bind FAD. 277 to 282 (GIGITP) contacts NADP(+). Residue 382-385 (FFGP) coordinates FAD.

The protein belongs to the globin family. Two-domain flavohemoproteins subfamily. In the C-terminal section; belongs to the flavoprotein pyridine nucleotide cytochrome reductase family. FAD serves as cofactor. The cofactor is heme b.

It is found in the cytoplasm. It carries out the reaction 2 nitric oxide + NADPH + 2 O2 = 2 nitrate + NADP(+) + H(+). The enzyme catalyses 2 nitric oxide + NADH + 2 O2 = 2 nitrate + NAD(+) + H(+). In terms of biological role, is involved in NO detoxification in an aerobic process, termed nitric oxide dioxygenase (NOD) reaction that utilizes O(2) and NAD(P)H to convert NO to nitrate, which protects the fungus from various noxious nitrogen compounds. Therefore, plays a central role in the inducible response to nitrosative stress. In the presence of oxygen and NADH, it has NADH oxidase activity, which leads to the generation of superoxide and H(2)O(2). Under anaerobic conditions, it also exhibits nitric oxide reductase and FAD reductase activities. However, all these reactions are much lower than NOD activity. The polypeptide is Flavohemoprotein (Candida norvegensis (Yeast)).